Consider the following 910-residue polypeptide: Protein translocase subunit SecA (910 aa).

ATP contacts are provided by residues Gln-87, 105–109 (GEGKT), and Asp-512. 3 stretches are compositionally biased toward basic and acidic residues: residues 561–571 (RHESRRIDNQL), 841–853 (EEER…ELAR), and 880–890 (TFEREARKVGR). Disordered regions lie at residues 561 to 584 (RHES…AGSS) and 835 to 910 (EEVD…GKIN). The Zn(2+) site is built by Cys-894, Cys-896, Cys-905, and His-906. The span at 900–910 (KKYKQCHGKIN) shows a compositional bias: basic residues.

The protein belongs to the SecA family. As to quaternary structure, monomer and homodimer. Part of the essential Sec protein translocation apparatus which comprises SecA, SecYEG and auxiliary proteins SecDF-YajC and YidC. Requires Zn(2+) as cofactor.

The protein resides in the cell inner membrane. Its subcellular location is the cytoplasm. It carries out the reaction ATP + H2O + cellular proteinSide 1 = ADP + phosphate + cellular proteinSide 2.. Part of the Sec protein translocase complex. Interacts with the SecYEG preprotein conducting channel. Has a central role in coupling the hydrolysis of ATP to the transfer of proteins into and across the cell membrane, serving both as a receptor for the preprotein-SecB complex and as an ATP-driven molecular motor driving the stepwise translocation of polypeptide chains across the membrane. In Photobacterium profundum (strain SS9), this protein is Protein translocase subunit SecA.